The primary structure comprises 430 residues: Asparagine--tRNA ligase (430 aa).

Belongs to the class-II aminoacyl-tRNA synthetase family. Homodimer.

Its subcellular location is the cytoplasm. It catalyses the reaction tRNA(Asn) + L-asparagine + ATP = L-asparaginyl-tRNA(Asn) + AMP + diphosphate + H(+). This chain is Asparagine--tRNA ligase, found in Listeria monocytogenes serotype 4b (strain F2365).